The sequence spans 575 residues: Manganese transporter SMF1 (575 aa).

The Extracellular portion of the chain corresponds to 1–70 (MVNVGPSHAA…TYVSKRQVMR (70 aa)). The residue at position 24 (Ser24) is a Phosphoserine. Glycyl lysine isopeptide (Lys-Gly) (interchain with G-Cter in ubiquitin) cross-links involve residues Lys33 and Lys34. A helical transmembrane segment spans residues 71 to 91 (DIFAKYLKFIGPGLMVSVAYI). Residues 92-108 (DPGNYSTAVDAGASNQF) lie on the Cytoplasmic side of the membrane. Residues 109–129 (SLLCIILLSNFIAIFLQCLCI) traverse the membrane as a helical segment. Over 130–156 (KLGSVTGLDLSRACREYLPRWLNWTLY) the chain is Extracellular. A helical transmembrane segment spans residues 157–177 (FFAECAVIATDIAEVIGTAIA). The Cytoplasmic segment spans residues 178 to 179 (LN). Residues 180-200 (ILIKVPLPAGVAITVVDVFLI) form a helical membrane-spanning segment. Residues 201-218 (MFTYKPGASSIRFIRIFE) are Extracellular-facing. Residues 219–239 (CFVAVLVVGVCICFAIELAYI) form a helical membrane-spanning segment. Residues 240–266 (PKSTSVKQVFRGFVPSAQMFDHNGIYT) are Cytoplasmic-facing. A helical membrane pass occupies residues 267–287 (AISILGATVMPHSLFLGSALV). Residues 288-344 (QPRLLDYDVKHGNYTVSEEQDKVKKSKSTEEIMEEKYFNYRPTNAAIKYCMKYSMVE) are Extracellular-facing. A helical membrane pass occupies residues 345–365 (LSITLFTLALFVNCAILVVAG). Topologically, residues 366-396 (STLYNSPEADGADLFTIHELLSRNLAPAAGT) are cytoplasmic. A helical transmembrane segment spans residues 397-417 (IFMLALLLSGQSAGVVCTMSG). Residues 418–463 (QIVSEGHINWKLQPWQRRLATRCISIIPCLVISICIGREALSKALN) lie on the Extracellular side of the membrane. The chain crosses the membrane as a helical span at residues 464–484 (ASQVVLSIVLPFLVAPLIFFT). The Cytoplasmic segment spans residues 485–543 (CKKSIMKTEITVDHTEEDSHNHQNNNDRSAGSVIEQDGSSGMEIENGKDVKIVYMANNW). The interval 498–517 (HTEEDSHNHQNNNDRSAGSV) is disordered. Residues 544–564 (IITVIAIIVWLFLSLLNVYAI) traverse the membrane as a helical segment. The Extracellular portion of the chain corresponds to 565 to 575 (VQLGMSHGDIS).

Belongs to the NRAMP family.

The protein localises to the cell membrane. The catalysed reaction is Mn(2+)(in) = Mn(2+)(out). Its function is as follows. High-affinity manganese transporter involved in manganese uptake from the extracellular environment. Also contributes to cellular accumulation of other divalent metal ions such as cadmium, cobalt, copper, iron and nickel. This Saccharomyces cerevisiae (strain ATCC 204508 / S288c) (Baker's yeast) protein is Manganese transporter SMF1 (SMF1).